The chain runs to 248 residues: 4-hydroxy-tetrahydrodipicolinate reductase (248 aa).

NAD(+)-binding positions include D32, 74–76 (GTT), and 99–102 (SANF). H134 functions as the Proton donor/acceptor in the catalytic mechanism. H135 is a binding site for (S)-2,3,4,5-tetrahydrodipicolinate. The active-site Proton donor is K138. Residue 144–145 (GT) participates in (S)-2,3,4,5-tetrahydrodipicolinate binding.

Belongs to the DapB family.

It localises to the cytoplasm. The catalysed reaction is (S)-2,3,4,5-tetrahydrodipicolinate + NAD(+) + H2O = (2S,4S)-4-hydroxy-2,3,4,5-tetrahydrodipicolinate + NADH + H(+). It catalyses the reaction (S)-2,3,4,5-tetrahydrodipicolinate + NADP(+) + H2O = (2S,4S)-4-hydroxy-2,3,4,5-tetrahydrodipicolinate + NADPH + H(+). It participates in amino-acid biosynthesis; L-lysine biosynthesis via DAP pathway; (S)-tetrahydrodipicolinate from L-aspartate: step 4/4. In terms of biological role, catalyzes the conversion of 4-hydroxy-tetrahydrodipicolinate (HTPA) to tetrahydrodipicolinate. This Chlorobium luteolum (strain DSM 273 / BCRC 81028 / 2530) (Pelodictyon luteolum) protein is 4-hydroxy-tetrahydrodipicolinate reductase.